The chain runs to 92 residues: Small ribosomal subunit protein uS19 (92 aa).

The protein belongs to the universal ribosomal protein uS19 family.

Its function is as follows. Protein S19 forms a complex with S13 that binds strongly to the 16S ribosomal RNA. This is Small ribosomal subunit protein uS19 from Neisseria meningitidis serogroup C (strain 053442).